Consider the following 299-residue polypeptide: ClpXP adapter protein SpxH (299 aa).

The protein belongs to the SpxH family. In terms of assembly, interacts with Spx. Interacts with SpxO/YuzO.

The protein localises to the cytoplasm. Its activity is regulated as follows. Irreversible aggregation upon several stress conditions prevents interaction with Spx and therefore leads to Spx stabilization. Inhibited by interaction with SpxO/YuzO. In terms of biological role, adapter protein required for efficient degradation of Spx by ClpXP under non-stress conditions. Interaction with Spx stabilizes Spx and exposes the C-terminus of Spx for recognition and proteolysis by ClpXP. Is specific for Spx and does not enhance proteolysis by ClpCP protease. Probably binds 2 zinc ions. This chain is ClpXP adapter protein SpxH, found in Bacillus subtilis (strain 168).